We begin with the raw amino-acid sequence, 71 residues long: Large ribosomal subunit protein bL31 (71 aa).

Zn(2+)-binding residues include C16, C18, C37, and C40.

Belongs to the bacterial ribosomal protein bL31 family. Type A subfamily. Part of the 50S ribosomal subunit. Requires Zn(2+) as cofactor.

Its function is as follows. Binds the 23S rRNA. This Yersinia pseudotuberculosis serotype O:1b (strain IP 31758) protein is Large ribosomal subunit protein bL31.